A 234-amino-acid polypeptide reads, in one-letter code: LexA repressor (234 aa).

Basic and acidic residues predominate over residues 1–11; that stretch reads MNEATSHEGPK. The disordered stretch occupies residues 1–34; sequence MNEATSHEGPKRSLPGRPPGIRADSSGLTDRQRR. The segment at residues 52–72 is a DNA-binding region (H-T-H motif); the sequence is MREIGQAVGLSSTSSVAHQLM. The span at 83–94 shows a compositional bias: basic and acidic residues; it reads DPHRPRAYEVRG. Residues 83-109 are disordered; sequence DPHRPRAYEVRGSDQSSSVQPTDTAGK. Positions 95–105 are enriched in polar residues; that stretch reads SDQSSSVQPTD. Catalysis depends on for autocatalytic cleavage activity residues serine 158 and lysine 195.

Belongs to the peptidase S24 family. Homodimer.

It carries out the reaction Hydrolysis of Ala-|-Gly bond in repressor LexA.. Its function is as follows. Represses a number of genes involved in the response to DNA damage (SOS response), including recA and lexA. In the presence of single-stranded DNA, RecA interacts with LexA causing an autocatalytic cleavage which disrupts the DNA-binding part of LexA, leading to derepression of the SOS regulon and eventually DNA repair. The protein is LexA repressor of Streptomyces avermitilis (strain ATCC 31267 / DSM 46492 / JCM 5070 / NBRC 14893 / NCIMB 12804 / NRRL 8165 / MA-4680).